Consider the following 457-residue polypeptide: Phosphomethylpyrimidine synthase (457 aa).

Residues Asn-80, Met-109, Tyr-139, His-175, 195–197 (SRG), 236–239 (DSLR), and Glu-275 each bind substrate. A Zn(2+)-binding site is contributed by His-279. A substrate-binding site is contributed by Tyr-302. Zn(2+) is bound at residue His-343. [4Fe-4S] cluster-binding residues include Cys-423, Cys-426, and Cys-431.

The protein belongs to the ThiC family. Requires [4Fe-4S] cluster as cofactor.

The catalysed reaction is 5-amino-1-(5-phospho-beta-D-ribosyl)imidazole + S-adenosyl-L-methionine = 4-amino-2-methyl-5-(phosphooxymethyl)pyrimidine + CO + 5'-deoxyadenosine + formate + L-methionine + 3 H(+). The protein operates within cofactor biosynthesis; thiamine diphosphate biosynthesis. Its function is as follows. Catalyzes the synthesis of the hydroxymethylpyrimidine phosphate (HMP-P) moiety of thiamine from aminoimidazole ribotide (AIR) in a radical S-adenosyl-L-methionine (SAM)-dependent reaction. The chain is Phosphomethylpyrimidine synthase from Nostoc punctiforme (strain ATCC 29133 / PCC 73102).